The primary structure comprises 150 residues: Allograft inflammatory factor 1-like (150 aa).

An N-acetylserine modification is found at S2. At S2 the chain carries Phosphoserine. Residues 47–82 (EKLTAFKEKYMEFDLNNEGEIDLMSLKRMMEKLGVP) enclose the EF-hand 1 domain. Residues D60, N62, E64, and E66 each contribute to the Ca(2+) site. An EF-hand 2; degenerate domain is found at 83 to 117 (KTHLEMKKMISEVTGGVSDTISYRDFVNMMLGKRS). The segment at 129–150 (KANESSPKPVGPPPERDIASLP) is disordered. Residue S134 is modified to Phosphoserine.

Homodimer (Potential). Monomer.

The protein resides in the cytoplasm. It is found in the cytoskeleton. The protein localises to the cell projection. It localises to the ruffle membrane. Functionally, actin-binding protein that promotes actin bundling. May neither bind calcium nor depend on calcium for function. The polypeptide is Allograft inflammatory factor 1-like (AIF1L) (Homo sapiens (Human)).